Here is a 190-residue protein sequence, read N- to C-terminus: Selenoprotein S (190 aa).

Over residues 1–13 the composition is skewed to basic and acidic residues; the sequence is MEAEDGARVRNED. A disordered region spans residues 1–20; it reads MEAEDGARVRNEDVPPQNQD. Residues 30–50 form a helical membrane-spanning segment; that stretch reads AFMSEYGWYLLFGCVGVYLLI. Residues 58–68 are compositionally biased toward low complexity; it reads SSTQTRSSSGS. Residues 58–190 form a disordered region; sequence SSTQTRSSSG…RRGPSAGGUG (133 aa). Positions 79-120 are enriched in basic and acidic residues; the sequence is RRQEALEASRRRMQEEQDARAAEFREKQRMLEEEKRRQKIEM. Residues 136–151 show a composition bias toward polar residues; the sequence is VAQQNTEEAASSSSLR. Residue Sec189 is a non-standard amino acid, selenocysteine.

Belongs to the selenoprotein S family.

It localises to the endoplasmic reticulum membrane. The protein localises to the cytoplasm. Functionally, involved in the degradation process of misfolded endoplasmic reticulum (ER) luminal proteins. Participates in the transfer of misfolded proteins from the ER to the cytosol, where they are destroyed by the proteasome in a ubiquitin-dependent manner. This is Selenoprotein S (vimp) from Danio rerio (Zebrafish).